Consider the following 629-residue polypeptide: MFYQDPFDVIIIGGGHAGTEAAMAAARMGQQTLLLTHNIDTLGQMSCNPAIGGIGKGHLVKEVDALGGLMAKAIDQAGIQFRILNASKGPAVRATRAQADRVLYRQAVRTALENQPNLMIFQQAVEDLIVENDRVVGAVTQMGLKFRAKAVVLTVGTFLDGKIHIGLDNYSGGRAGDPPSIPLSRRLRELPLRVSRLKTGTPPRIDARTIDFSVLAQQHGDNPMPVFSFMGNASQHPQQVPCYITHTNEKTHDVIRNNLDRSPMYAGVIEGIGPRYCPSIEDKVMRFADRNQHQIFLEPEGLTSNEIYPNGISTSLPFDVQMQIVRSMQGMENAKIVRPGYAIEYDFFDPRDLKPTLESKFIHGLFFAGQINGTTGYEEAAAQGLLAGLNAARLSADKERWAPARSQAYLGVLVDDLCTLGTKEPYRMFTSRAEYRLMLREDNADLRLTEMGRELGLVDDERWARFNEKLENIERERQRLKSTWVTPSAESADEVNAHLTTPLSREASGEDLLRRPEMTYAQLTSLAAFAPALEDEQAAEQVEIQVKYEGYIARQQDEIEKQLRNENTLLPATLDYRQVSGLSNEVIAKLNDHKPASIGQASRISGVTPAAISILLVWLKKQGMLRRSA.

FAD contacts are provided by residues 13–18 (GGGHAG), Val-125, and Ser-180. 273 to 287 (GPRYCPSIEDKVMRF) is an NAD(+) binding site. FAD is bound at residue Gln-370.

Belongs to the MnmG family. As to quaternary structure, homodimer. Heterotetramer of two MnmE and two MnmG subunits. FAD serves as cofactor.

Its subcellular location is the cytoplasm. In terms of biological role, NAD-binding protein involved in the addition of a carboxymethylaminomethyl (cmnm) group at the wobble position (U34) of certain tRNAs, forming tRNA-cmnm(5)s(2)U34. The chain is tRNA uridine 5-carboxymethylaminomethyl modification enzyme MnmG from Salmonella paratyphi A (strain ATCC 9150 / SARB42).